Consider the following 342-residue polypeptide: uncharacterized protein (342 aa).

This sequence belongs to the cycloisomerase 2 family.

This is an uncharacterized protein from Staphylococcus aureus (strain NCTC 8325 / PS 47).